The following is a 62-amino-acid chain: Protein YmcF (62 aa).

The protein belongs to the YmcF/YnqF peptide family.

In Escherichia coli (strain K12), this protein is Protein YmcF.